The following is a 90-amino-acid chain: Small ribosomal subunit protein bS20 (90 aa).

Residues 1 to 29 (MANTASAEKRNRQAQKRRARNVQVRTGVK) are disordered.

The protein belongs to the bacterial ribosomal protein bS20 family.

Its function is as follows. Binds directly to 16S ribosomal RNA. The chain is Small ribosomal subunit protein bS20 from Anaeromyxobacter sp. (strain Fw109-5).